We begin with the raw amino-acid sequence, 155 residues long: UPF0225 protein ECA2332 (155 aa).

The protein belongs to the UPF0225 family.

This chain is UPF0225 protein ECA2332, found in Pectobacterium atrosepticum (strain SCRI 1043 / ATCC BAA-672) (Erwinia carotovora subsp. atroseptica).